Consider the following 417-residue polypeptide: Riboflavin biosynthesis protein RibBA (417 aa).

The tract at residues 1–204 (MTRFDSIERA…IADLIAWRRK (204 aa)) is DHBP synthase. D-ribulose 5-phosphate is bound by residues 28–29 (RE), D33, 141–145 (RPGHT), and E165. Residue E29 coordinates Mg(2+). H144 lines the Mg(2+) pocket. A GTP cyclohydrolase II region spans residues 205-417 (HEKHVERVAS…LDDFEAGEML (213 aa)). 259-263 (RVHSE) lines the GTP pocket. Zn(2+) contacts are provided by C264, C275, and C277. GTP is bound by residues Q280, 303–305 (EGR), and T325. D337 acts as the Proton acceptor; for GTP cyclohydrolase activity in catalysis. R339 acts as the Nucleophile; for GTP cyclohydrolase activity in catalysis. 2 residues coordinate GTP: T360 and K365.

It in the N-terminal section; belongs to the DHBP synthase family. This sequence in the C-terminal section; belongs to the GTP cyclohydrolase II family. Requires Mg(2+) as cofactor. The cofactor is Mn(2+). Zn(2+) serves as cofactor.

The catalysed reaction is D-ribulose 5-phosphate = (2S)-2-hydroxy-3-oxobutyl phosphate + formate + H(+). The enzyme catalyses GTP + 4 H2O = 2,5-diamino-6-hydroxy-4-(5-phosphoribosylamino)-pyrimidine + formate + 2 phosphate + 3 H(+). It participates in cofactor biosynthesis; riboflavin biosynthesis; 2-hydroxy-3-oxobutyl phosphate from D-ribulose 5-phosphate: step 1/1. The protein operates within cofactor biosynthesis; riboflavin biosynthesis; 5-amino-6-(D-ribitylamino)uracil from GTP: step 1/4. Functionally, catalyzes the conversion of D-ribulose 5-phosphate to formate and 3,4-dihydroxy-2-butanone 4-phosphate. Its function is as follows. Catalyzes the conversion of GTP to 2,5-diamino-6-ribosylamino-4(3H)-pyrimidinone 5'-phosphate (DARP), formate and pyrophosphate. This is Riboflavin biosynthesis protein RibBA from Rhodococcus jostii (strain RHA1).